A 1450-amino-acid chain; its full sequence is MALETDAKNSNAVAPGDAATVATTKAKENNSSAGKKQQQQQQPNQNQNLVNGNGNAADGPAAKKKGKKNRNKSPPEPAAEPVEASLSNGHAEKTTSEEGGDTAAPDTNANVGEKSEDGGGAAPGSELETEDIDLDALHEVGITVNISSPGADILSVQLSSMELVQEIHQLLMDREETCHRTCFSLQLDNVTLDNFAELKTIEQLEQGSTIRVVEEPYTMREARIHVRHVRDLLKNLDPADAYNGIDCTSLTYLNTITQGDLLDKKKTRPDSVDCTPPEYVTPGVSEPPLLPLHPNIKNAKGPQALKVLTTSAWNPPPGPRKLHGDLMYLYVVTMEDKRFHISACSKGFYINQSTDDTFNPKPDNPSHLSHSLIDLLSHISPSFRRAFQTIQKRRTTRHAFERVATPYQVYQWASPVLEHTVDAIRAEDAFSSKLGYEEHIPGQTRDWNEELQTTRELPRKTLPERLLRERAIFKVHGDFVTAATRGAMAVIDGNVLAINPGEDAKMQMFIWNNIFFSLGFDVRDHYKELGGDAAAFVAPRYDLHGVRVYNAVDVEGLYTLGTVVIDYRGYRVTAQSIIPGILEREQEQSVVYGSIDFGKTVLSHPKYLDLLRQAGKHLKILPHAVLNERDEPVELCSSVECKGIIGNDGRHYILDLLRTFPPDVNFLKLPEVQLSKELVDMGFPIEHRHKLCCLRQELLEAFIEDRYVSFIRIAAVHLQQLNAKKQSEKTEEKALPALEEAEKESSETKEAEAEKPVEKKEEEKQQPSSNETKTAEAMVNAIREAQSNVATSNEVQAAEVVKRACAAVGSLKEKEFDFRFNPDVFSNGIRHVDGEEGTCSSLAKQKVLVQDAAEFLVVKQIPAFIKEHLAHSSPPIDGQSLTESLHSHGINVRYLGKVIKLLAQMPRMDYLHRIAVLELIVRATKHIYYTYMQNTEPLHLSAAISHFLNCLLTTGPVNPAVSSEEAHKKRSNGNKHNKHKSKGNKQQASGNQNGSSAGSSSGGSSSSSDWTLVTPRSLWQQIRREAKSYWDWELDCDSIETAVSKYGILRISLLRAFCLKVGIQVLLREYNFESKHKPTFGDEDIVNVFPVVKHISPRATDAYNFYTTGQAKIQQGMFKEGYELISEALNLLNNVFGAMHQENGSCLRMLARLSYLLGDAQDALAIQQRAVIMSERVNGIDHPSTILEYTHLSLYSFANGHVGMSLKLLYRARYLMVLICGEDHPEVALIDSNISLILHALGEYELSLRFIEHALKLNIKYFGSKAMHVAFSYHLMARTQSCMGDFRSALNNEKETYSIYKSQVGEKHEKTRDSAECLRLLTQQAVLLQRKMNDIYSNGKLTSDLPPIHITPPSMGSVLDMLNTINGILFVQISQKDIVKVRSEIEKHFKANSAENEVNDAIKSIVAAANNNGDTEAETKDATKDNKDLAGASTQLTNGDKDAETAVASS.

Disordered regions lie at residues 1–126 and 266–287; these read MALE…PGSE and KTRP…VSEP. The span at 29 to 60 shows a compositional bias: low complexity; sequence NNSSAGKKQQQQQQPNQNQNLVNGNGNAADGP. Positions 62–71 are enriched in basic residues; it reads AKKKGKKNRN. Residue Ser271 is modified to Phosphoserine. Positions 425–667 constitute a Clu domain; the sequence is RAEDAFSSKL…RTFPPDVNFL (243 aa). 2 stretches are compositionally biased toward basic and acidic residues: residues 725-734 and 743-765; these read KQSEKTEEKA and KESS…EEKQ. Disordered regions lie at residues 725-775 and 959-1011; these read KQSE…TKTA and PAVS…SDWT. The segment covering 968 to 983 has biased composition (basic residues); sequence KKRSNGNKHNKHKSKG. Over residues 984–1008 the composition is skewed to low complexity; that stretch reads NKQQASGNQNGSSAGSSSGGSSSSS. 3 TPR repeats span residues 1102–1135, 1228–1261, and 1263–1296; these read AYNF…LNNV, ALID…NIKY, and GSKA…EKET. Positions 1410–1450 are disordered; sequence NNNGDTEAETKDATKDNKDLAGASTQLTNGDKDAETAVASS. Positions 1417-1428 are enriched in basic and acidic residues; sequence AETKDATKDNKD.

Belongs to the CLU family.

The protein localises to the cytoplasm. Its function is as follows. mRNA-binding protein involved in proper cytoplasmic distribution of mitochondria. The chain is Protein clueless from Drosophila ananassae (Fruit fly).